A 223-amino-acid polypeptide reads, in one-letter code: Type II restriction enzyme BglII (223 aa).

Residues D84 and V94 each contribute to the Mg(2+) site.

As to quaternary structure, homodimer. Mg(2+) is required as a cofactor.

The enzyme catalyses Endonucleolytic cleavage of DNA to give specific double-stranded fragments with terminal 5'-phosphates.. In terms of biological role, a P subtype restriction enzyme that recognizes the double-stranded sequence 5'-AGATCT-3' and cleaves after A-1. In Bacillus subtilis, this protein is Type II restriction enzyme BglII (bglIIR).